The primary structure comprises 619 residues: Phosphomethylpyrimidine synthase (619 aa).

Positions methionine 1–alanine 11 are enriched in polar residues. The interval methionine 1 to arginine 25 is disordered. Substrate contacts are provided by residues asparagine 220, methionine 249, tyrosine 278, histidine 314, serine 334–glycine 336, aspartate 375–arginine 378, and glutamate 414. Residue histidine 418 coordinates Zn(2+). Position 441 (tyrosine 441) interacts with substrate. Histidine 482 contacts Zn(2+). [4Fe-4S] cluster contacts are provided by cysteine 562, cysteine 565, and cysteine 570.

It belongs to the ThiC family. Homodimer. The cofactor is [4Fe-4S] cluster.

The catalysed reaction is 5-amino-1-(5-phospho-beta-D-ribosyl)imidazole + S-adenosyl-L-methionine = 4-amino-2-methyl-5-(phosphooxymethyl)pyrimidine + CO + 5'-deoxyadenosine + formate + L-methionine + 3 H(+). Its pathway is cofactor biosynthesis; thiamine diphosphate biosynthesis. Its function is as follows. Catalyzes the synthesis of the hydroxymethylpyrimidine phosphate (HMP-P) moiety of thiamine from aminoimidazole ribotide (AIR) in a radical S-adenosyl-L-methionine (SAM)-dependent reaction. The chain is Phosphomethylpyrimidine synthase from Mesorhizobium japonicum (strain LMG 29417 / CECT 9101 / MAFF 303099) (Mesorhizobium loti (strain MAFF 303099)).